Here is a 256-residue protein sequence, read N- to C-terminus: uncharacterized protein (256 aa).

It belongs to the metallo-beta-lactamase superfamily.

This is an uncharacterized protein from Methanocaldococcus jannaschii (strain ATCC 43067 / DSM 2661 / JAL-1 / JCM 10045 / NBRC 100440) (Methanococcus jannaschii).